We begin with the raw amino-acid sequence, 273 residues long: Dermonecrotic toxin LhSicTox-alphaIA1iii (273 aa).

The active site involves His5. The Mg(2+) site is built by Glu25 and Asp27. His41 serves as the catalytic Nucleophile. 2 disulfides stabilise this stretch: Cys45/Cys51 and Cys47/Cys190. Residue Asp85 coordinates Mg(2+).

Belongs to the arthropod phospholipase D family. Class II subfamily. Mg(2+) is required as a cofactor. In terms of tissue distribution, expressed by the venom gland.

Its subcellular location is the secreted. The enzyme catalyses an N-(acyl)-sphingosylphosphocholine = an N-(acyl)-sphingosyl-1,3-cyclic phosphate + choline. The catalysed reaction is an N-(acyl)-sphingosylphosphoethanolamine = an N-(acyl)-sphingosyl-1,3-cyclic phosphate + ethanolamine. It catalyses the reaction a 1-acyl-sn-glycero-3-phosphocholine = a 1-acyl-sn-glycero-2,3-cyclic phosphate + choline. It carries out the reaction a 1-acyl-sn-glycero-3-phosphoethanolamine = a 1-acyl-sn-glycero-2,3-cyclic phosphate + ethanolamine. Functionally, dermonecrotic toxins cleave the phosphodiester linkage between the phosphate and headgroup of certain phospholipids (sphingolipid and lysolipid substrates), forming an alcohol (often choline) and a cyclic phosphate. This toxin acts on sphingomyelin (SM). It may also act on ceramide phosphoethanolamine (CPE), lysophosphatidylcholine (LPC) and lysophosphatidylethanolamine (LPE), but not on lysophosphatidylserine (LPS), and lysophosphatidylglycerol (LPG). It acts by transphosphatidylation, releasing exclusively cyclic phosphate products as second products. Induces dermonecrosis, hemolysis, increased vascular permeability, edema, inflammatory response, and platelet aggregation. The polypeptide is Dermonecrotic toxin LhSicTox-alphaIA1iii (Loxosceles hirsuta (Recluse spider)).